Reading from the N-terminus, the 453-residue chain is Keratin, type I cytoskeletal 15 (453 aa).

The head stretch occupies residues 1-102 (MATTLLQTSS…GGDGGLLSGN (102 aa)). Phosphoserine is present on residues serine 16, serine 17, serine 34, serine 48, and serine 56. The interval 103–138 (EKITMQNLNDRLASYLEKVRALEEANADLEVKIRDW) is coil 1A. The 313-residue stretch at 103–415 (EKITMQNLND…SLLEGQDARM (313 aa)) folds into the IF rod domain. The tract at residues 139–157 (YQRQSPTSPERDYSPYFKT) is linker 1. The interval 158 to 249 (TDELRDKILA…KNHEEEMKEF (92 aa)) is coil 1B. The interval 250 to 269 (SNQLAGQVNVEMDAAPGVDL) is linker 12. The tract at residues 270 to 411 (TRVLSEMREQ…ATYHSLLEGQ (142 aa)) is coil 2. Lysine 298 participates in a covalent cross-link: Glycyl lysine isopeptide (Lys-Gly) (interchain with G-Cter in SUMO2). Phosphothreonine occurs at positions 299 and 321. Residues 412-453 (DARMAGIGTGEASLGGGGGGKVRINVEESVDGKVVSSRKREI) are tail. Lysine 444 is covalently cross-linked (Glycyl lysine isopeptide (Lys-Gly) (interchain with G-Cter in SUMO1); alternate). A Glycyl lysine isopeptide (Lys-Gly) (interchain with G-Cter in SUMO2); alternate cross-link involves residue lysine 444.

It belongs to the intermediate filament family. As to quaternary structure, heterotetramer of two type I and two type II keratins. Interacts with NOD2. In terms of tissue distribution, expressed in the basal cell layers of several stratified epithelia including esophagus, tongue, stomach, epidermis and hair follicle. In the hair follicle, expression is detected mainly in the basal layer of the outer root sheath (ORS), except just above the follicle bulb where it occurs throughout its thickness. Low expression levels are seen in the single layer of ORS cells around the base of the follicle which increases in the palisade-like cells of the bulb. Also expressed in the basal cells of the sebaceous glands, and expression in the epidermis occurs in a punctate pattern.

The polypeptide is Keratin, type I cytoskeletal 15 (Ovis aries (Sheep)).